The sequence spans 356 residues: MDFFYKYLALVAIASLMVFILLFGQIPKLKYTVIGKLNRFFMVTIPYHLHVLDSRYADGRCSAAMRSLSNYVLYKNNPLVVFLYLALITIGIASFFIYGSSLTQKFSIIDWISVLTSVLLPYISLYIAAKSNPGKIDLKNWNEASRRFPYDYKIFFPNKCSTCKFEKPARSKHCRLCNICVEKFDHHCIWINNCVGLNNARYFFLFLLCTIQLLFHSILRLGYHFNALRDMRQYPSFLRSWWFAIKSEGELGSVFLISLICSVLVLCLLGYEFFLVYAGYTTNESEKWSDLAHLVKNRKVYMYYENGSQLLALDKDASNDAILVTSMSQIDNIYDNGFYNNFFSLVFPYRHLYSTT.

Over 1–2 (MD) the chain is Lumenal. Residues 3–23 (FFYKYLALVAIASLMVFILLF) traverse the membrane as a helical segment. Residues 24-78 (GQIPKLKYTVIGKLNRFFMVTIPYHLHVLDSRYADGRCSAAMRSLSNYVLYKNNP) are Cytoplasmic-facing. A helical transmembrane segment spans residues 79–99 (LVVFLYLALITIGIASFFIYG). Over 100-107 (SSLTQKFS) the chain is Lumenal. Residues 108–128 (IIDWISVLTSVLLPYISLYIA) traverse the membrane as a helical segment. The Cytoplasmic portion of the chain corresponds to 129–201 (AKSNPGKIDL…NNCVGLNNAR (73 aa)). The DHHC domain occupies 158 to 208 (NKCSTCKFEKPARSKHCRLCNICVEKFDHHCIWINNCVGLNNARYFFLFLL). The helical transmembrane segment at 202 to 222 (YFFLFLLCTIQLLFHSILRLG) threads the bilayer. Residues 223–253 (YHFNALRDMRQYPSFLRSWWFAIKSEGELGS) lie on the Lumenal side of the membrane. A helical membrane pass occupies residues 254 to 274 (VFLISLICSVLVLCLLGYEFF). Topologically, residues 275 to 356 (LVYAGYTTNE…FPYRHLYSTT (82 aa)) are cytoplasmic.

Belongs to the DHHC palmitoyltransferase family. SWF1 subfamily.

The protein localises to the endoplasmic reticulum membrane. It catalyses the reaction L-cysteinyl-[protein] + hexadecanoyl-CoA = S-hexadecanoyl-L-cysteinyl-[protein] + CoA. In terms of biological role, palmitoyltransferase that targets several endosomal SNAREs. Palmitoylates the SNAREs at cysteine residues close to the cytoplasmic end of their transmembrane domain. May have a role in the cellular quality control of transmembrane domain-containing proteins. The polypeptide is Palmitoyltransferase swf1 (swf1) (Schizosaccharomyces pombe (strain 972 / ATCC 24843) (Fission yeast)).